We begin with the raw amino-acid sequence, 564 residues long: Nucleoprotein (564 aa).

The interval 54–236 is binding site for the cap structure m7GTP; that stretch reads LRKTKRGEED…VTKDESSINI (183 aa). Mn(2+) contacts are provided by Asp380 and Glu382. Residues Glu390, Cys497, His500, and Cys525 each coordinate Zn(2+). Asp529 is a binding site for Mn(2+).

It belongs to the arenaviridae nucleocapsid protein family. In terms of assembly, homomultimerizes to form the nucleocapsid. Binds to viral genomic RNA. Interacts with glycoprotein G2. Interacts with protein Z; this interaction probably directs the encapsidated genome to budding sites. Interacts with protein L; this interaction does not interfere with Z-L interaction. Interacts with host IKBKE (via Protein kinase domain); the interaction inhibits IKBKE kinase activity.

It is found in the virion. It localises to the host cytoplasm. Encapsidates the genome, protecting it from nucleases. The encapsidated genomic RNA is termed the nucleocapsid (NC). Serves as template for viral transcription and replication. The increased presence of protein N in host cell does not seem to trigger the switch from transcription to replication as observed in other negative strain RNA viruses. Through the interaction with host IKBKE, strongly inhibits the phosphorylation and nuclear translocation of host IRF3, a protein involved in interferon activation pathway, leading to the inhibition of interferon-beta and IRF3-dependent promoters activation. Also encodes a functional 3'-5' exoribonuclease that degrades preferentially dsRNA substrates and thereby participates in the suppression of interferon induction. This Akodon azarae (Azara's grass mouse) protein is Nucleoprotein.